A 1020-amino-acid chain; its full sequence is Non-canonical nonribosomal peptide synthetase hkm10 (1020 aa).

Residues Gln21–Arg419 form an adenylation (A) domain region. The Carrier domain maps to Gln526 to Gln608. Ser568 bears the O-(pantetheine 4'-phosphoryl)serine mark. Positions Leu652–Thr894 are short-chain dehydrogenase/reductase (R) domain.

This sequence belongs to the NRP synthetase family.

It functions in the pathway secondary metabolite biosynthesis. Functionally, non-canonical nonribosomal peptide synthetase; part of the gene cluster that mediates the biosynthesis of hancockiamides, an unusual new family of N-cinnamoylated piperazines. The NRPS hkm10 and the NmrA-like reductase hkm9 are proposed to convert two molecules of L-Phe to the intermediary piperazine called xenocockiamide A. Xenocockiamide A is then converted to hancockiamide D via a series of hydroxylations and O-methylations. The tyrosinase hkm6 may catalyze an aromatic hydroxylation, then the 2-oxoglutarate-dependent Fe(II) dioxygenase hkm4 and the FAD-dependent phenol hydroxylase hkm7 may catalyze consecutive hydroxylations to install 2 more hydroxy groups, and the methyltransferase hkm8 probably catalyzes two methylations using 2 molecules of S-adenosyl-L-methionine (SAM). The NRPS hkm11 activates and transfers trans-cinnamate supplied by the PAL hkm12 to hancockiamide D and produces hancockiamide A. NRPS Hkm11 has the flexibility to tolerate the bulky hancockiamide G as a substrate and the absence of the acetyl-transferase hkm3 opens up the opportunity for hkm11 to introduce a second N-cinnamoyl moiety. The cytochrome P450 monooxygenase hkm5 catalyzes the methylenedioxy bridge formation, converting hancockiamide A into hancockiamide G. Hkm5 can also convert hancockiamide B into hancockiamide C, and hancockiamide D into hancockiamide H. The N-acetyltransferase hkm3 finally transfers an acetyl group to 1-N of piperazine, converting hancockiamide A into hancockiamide B and hancockiamide G into hancockiamide C. The chain is Non-canonical nonribosomal peptide synthetase hkm10 from Aspergillus hancockii.